The chain runs to 265 residues: 3-methyl-2-oxobutanoate hydroxymethyltransferase (265 aa).

2 residues coordinate Mg(2+): Asp44 and Asp83. 3-methyl-2-oxobutanoate contacts are provided by residues Asp44–Ser45, Asp83, and Lys113. A Mg(2+)-binding site is contributed by Glu115. The active-site Proton acceptor is Glu183.

Belongs to the PanB family. In terms of assembly, homodecamer; pentamer of dimers. It depends on Mg(2+) as a cofactor.

The protein localises to the cytoplasm. The catalysed reaction is 3-methyl-2-oxobutanoate + (6R)-5,10-methylene-5,6,7,8-tetrahydrofolate + H2O = 2-dehydropantoate + (6S)-5,6,7,8-tetrahydrofolate. The protein operates within cofactor biosynthesis; (R)-pantothenate biosynthesis; (R)-pantoate from 3-methyl-2-oxobutanoate: step 1/2. Catalyzes the reversible reaction in which hydroxymethyl group from 5,10-methylenetetrahydrofolate is transferred onto alpha-ketoisovalerate to form ketopantoate. This is 3-methyl-2-oxobutanoate hydroxymethyltransferase from Leptospira borgpetersenii serovar Hardjo-bovis (strain JB197).